A 328-amino-acid polypeptide reads, in one-letter code: Sin3 histone deacetylase corepressor complex component SDS3 (328 aa).

Residues 1 to 16 (MSAAGLLAPAPAQAGA) show a composition bias toward low complexity. The tract at residues 1–65 (MSAAGLLAPA…DLAKHDEEDY (65 aa)) is disordered. Residue S2 is modified to N-acetylserine. The segment at 2–170 (SAAGLLAPAP…IENEKLTMEL (169 aa)) is mediates interaction with USP17L2. Acidic residues-rich tracts occupy residues 23 to 37 (YPEE…EEDE) and 45 to 54 (SDEDTEDASE). 2 positions are modified to phosphoserine: S32 and S45. Position 49 is a phosphothreonine (T49). S53 is modified (phosphoserine). The span at 56–65 (DLAKHDEEDY) shows a compositional bias: basic and acidic residues. The stretch at 66–171 (VEMKEQMYQD…ENEKLTMELT (106 aa)) forms a coiled coil. Glycyl lysine isopeptide (Lys-Gly) (interchain with G-Cter in SUMO2) cross-links involve residues K69, K178, and K201. A sin3 interaction domain (SID) region spans residues 188-226 (RPNDPVPIPDKRRKPAPAQLNYLLTDEQIMEDLRTLNKL). The interval 226–252 (LKSPKRPASPSSPEHLPATPAESPAQR) is disordered. A phosphoserine mark is found at S228, S234, and S237. At T244 the chain carries Phosphothreonine.

Belongs to the SDS3 family. In terms of assembly, interacts with HCFC1. Homodimer. Component of the SIN3 histone deacetylase (HDAC) corepressor complex. Interacts with SIN3A. Interaction with SIN3B enhances the interaction between SIN3B and HDAC1 to form a complex. Component of a mSin3A corepressor complex that contains SIN3A, SAP130, SUDS3/SAP45, ARID4B/SAP180, HDAC1 and HDAC2. Interacts with USP17L2; the interaction is direct. Interacts with FOXK2. Polyubiquitinated. 'Lys-63'-polyubiquitinated SUDS3 positively regulates histone deacetylation. Regulated through deubiquitination by USP17L2/USP17 that cleaves 'Lys-63'-linked ubiquitin chains.

The protein localises to the nucleus. In terms of biological role, regulatory protein which represses transcription and augments histone deacetylase activity of HDAC1. May have a potential role in tumor suppressor pathways through regulation of apoptosis. May function in the assembly and/or enzymatic activity of the mSin3A corepressor complex or in mediating interactions between the complex and other regulatory complexes. This is Sin3 histone deacetylase corepressor complex component SDS3 (SUDS3) from Pongo abelii (Sumatran orangutan).